The sequence spans 167 residues: Putative NADH-quinone oxidoreductase subunit B 2 (167 aa).

This sequence belongs to the complex I 20 kDa subunit family. NDH-1 is composed of 14 different subunits. Subunits NuoB, C, D, E, F, and G constitute the peripheral sector of the complex.

Its subcellular location is the cell inner membrane. The enzyme catalyses a quinone + NADH + 5 H(+)(in) = a quinol + NAD(+) + 4 H(+)(out). In terms of biological role, NDH-1 shuttles electrons from NADH, via FMN and iron-sulfur (Fe-S) centers, to quinones in the respiratory chain. Couples the redox reaction to proton translocation (for every two electrons transferred, four hydrogen ions are translocated across the cytoplasmic membrane), and thus conserves the redox energy in a proton gradient. The sequence is that of Putative NADH-quinone oxidoreductase subunit B 2 from Burkholderia pseudomallei (strain 1710b).